The following is a 374-amino-acid chain: Type IV secretion system protein PtlG (374 aa).

A helical transmembrane segment spans residues 38-56 (WMFALVAVALSCLLATGIW). The segment at 86–117 (HPREPEPAPLPDMPAAPDPILPQPRPAPPVPP) is disordered. Pro residues predominate over residues 92–117 (PAPLPDMPAAPDPILPQPRPAPPVPP).

This sequence belongs to the TrbI/VirB10 family.

The protein localises to the cell membrane. In terms of biological role, component of the type IV secretion system ptl required for secretion of assembled pertussis toxin (PTX) through the outer membrane. The chain is Type IV secretion system protein PtlG (ptlG) from Bordetella pertussis (strain Tohama I / ATCC BAA-589 / NCTC 13251).